The primary structure comprises 265 residues: Small ribosomal subunit protein uS3 (265 aa).

Positions 39-107 constitute a KH type-2 domain; the sequence is VREFLKKKLK…PVHVNIEEIR (69 aa). Residues 211–265 form a disordered region; the sequence is NDAPVVEEPQEDRRRRPGRPEGRRREGEGRPAGNRRGGAGAGRRAAPGADAKSGE. A compositionally biased stretch (basic and acidic residues) spans 221-239; the sequence is EDRRRRPGRPEGRRREGEG.

This sequence belongs to the universal ribosomal protein uS3 family. Part of the 30S ribosomal subunit. Forms a tight complex with proteins S10 and S14.

Functionally, binds the lower part of the 30S subunit head. Binds mRNA in the 70S ribosome, positioning it for translation. The protein is Small ribosomal subunit protein uS3 of Cupriavidus metallidurans (strain ATCC 43123 / DSM 2839 / NBRC 102507 / CH34) (Ralstonia metallidurans).